The chain runs to 277 residues: Undecaprenyl-diphosphatase (277 aa).

A run of 7 helical transmembrane segments spans residues Ile-3–Pro-23, Val-43–Tyr-63, Leu-85–Ile-105, Leu-109–Ala-129, Thr-189–Phe-209, Ala-218–Ile-238, and Ser-249–Trp-269.

The protein belongs to the UppP family.

Its subcellular location is the cell inner membrane. The enzyme catalyses di-trans,octa-cis-undecaprenyl diphosphate + H2O = di-trans,octa-cis-undecaprenyl phosphate + phosphate + H(+). In terms of biological role, catalyzes the dephosphorylation of undecaprenyl diphosphate (UPP). Confers resistance to bacitracin. This is Undecaprenyl-diphosphatase from Albidiferax ferrireducens (strain ATCC BAA-621 / DSM 15236 / T118) (Rhodoferax ferrireducens).